Here is a 107-residue protein sequence, read N- to C-terminus: N(4)-acetylcytidine amidohydrolase (107 aa).

The ASCH domain occupies 6-102 (TFYRRFQADI…RLYVISFSLV (97 aa)). Lysine 20 serves as the catalytic Proton acceptor. Threonine 23 functions as the Nucleophile in the catalytic mechanism. The active-site Proton donor is glutamate 73.

It belongs to the N(4)-acetylcytidine amidohydrolase family.

The enzyme catalyses N(4)-acetylcytidine + H2O = cytidine + acetate + H(+). It catalyses the reaction N(4)-acetyl-2'-deoxycytidine + H2O = 2'-deoxycytidine + acetate + H(+). The catalysed reaction is N(4)-acetylcytosine + H2O = cytosine + acetate + H(+). Functionally, catalyzes the hydrolysis of N(4)-acetylcytidine (ac4C). The chain is N(4)-acetylcytidine amidohydrolase from Edwardsiella ictaluri (strain 93-146).